Reading from the N-terminus, the 119-residue chain is Beta-2-microglobulin (119 aa).

An N-terminal signal peptide occupies residues 1 to 20; the sequence is MARSVVVALLVLLSLSGLEA. The 90-residue stretch at 25-114 folds into the Ig-like C1-type domain; it reads PKIQVYSRHP…VTFSTPKTVK (90 aa). A disulfide bridge connects residues Cys-45 and Cys-100.

This sequence belongs to the beta-2-microglobulin family. As to quaternary structure, heterodimer of an alpha chain and a beta chain. Beta-2-microglobulin is the beta-chain of major histocompatibility complex class I molecules.

The protein resides in the secreted. Its function is as follows. Component of the class I major histocompatibility complex (MHC). Involved in the presentation of peptide antigens to the immune system. The polypeptide is Beta-2-microglobulin (B2M) (Ateles paniscus (Black spider monkey)).